The primary structure comprises 342 residues: GTPase Obg (342 aa).

Positions 1–159 (MKFLDEAKVY…MWIWLRLKLI (159 aa)) constitute an Obg domain. The OBG-type G domain occupies 160-327 (ADAGLVGLPN…ALRALQTEID (168 aa)). Residues 166–173 (GLPNAGKS), 191–195 (FTTLH), 212–215 (DIPG), 279–282 (SKAD), and 308–310 (SSA) contribute to the GTP site. Mg(2+) is bound by residues serine 173 and threonine 193.

This sequence belongs to the TRAFAC class OBG-HflX-like GTPase superfamily. OBG GTPase family. In terms of assembly, monomer. The cofactor is Mg(2+).

The protein localises to the cytoplasm. In terms of biological role, an essential GTPase which binds GTP, GDP and possibly (p)ppGpp with moderate affinity, with high nucleotide exchange rates and a fairly low GTP hydrolysis rate. Plays a role in control of the cell cycle, stress response, ribosome biogenesis and in those bacteria that undergo differentiation, in morphogenesis control. This chain is GTPase Obg, found in Methylobacterium radiotolerans (strain ATCC 27329 / DSM 1819 / JCM 2831 / NBRC 15690 / NCIMB 10815 / 0-1).